Consider the following 234-residue polypeptide: Octanoyltransferase (234 aa).

The 185-residue stretch at 42–226 (PDTPDEFWVV…ELASLIGYET (185 aa)) folds into the BPL/LPL catalytic domain. Residues 81–88 (RGGQVTYH), 157–159 (SLG), and 170–172 (GLA) each bind substrate. The Acyl-thioester intermediate role is filled by Cys-188.

Belongs to the LipB family.

It is found in the cytoplasm. It carries out the reaction octanoyl-[ACP] + L-lysyl-[protein] = N(6)-octanoyl-L-lysyl-[protein] + holo-[ACP] + H(+). The protein operates within protein modification; protein lipoylation via endogenous pathway; protein N(6)-(lipoyl)lysine from octanoyl-[acyl-carrier-protein]: step 1/2. Functionally, catalyzes the transfer of endogenously produced octanoic acid from octanoyl-acyl-carrier-protein onto the lipoyl domains of lipoate-dependent enzymes. Lipoyl-ACP can also act as a substrate although octanoyl-ACP is likely to be the physiological substrate. The chain is Octanoyltransferase from Aeromonas hydrophila subsp. hydrophila (strain ATCC 7966 / DSM 30187 / BCRC 13018 / CCUG 14551 / JCM 1027 / KCTC 2358 / NCIMB 9240 / NCTC 8049).